The chain runs to 266 residues: Proteasome subunit beta type-7 (266 aa).

Residues 1 to 34 (MENLNRGGFDFDLCNRNNVLEKTGLRMKGFMKTG) constitute a propeptide, removed in mature form. Thr35 serves as the catalytic Nucleophile.

Belongs to the peptidase T1B family. The 26S proteasome consists of a 20S proteasome core and two 19S regulatory subunits. The 20S proteasome core is composed of 28 subunits that are arranged in four stacked rings, resulting in a barrel-shaped structure. The two end rings are each formed by seven alpha subunits, and the two central rings are each formed by seven beta subunits. The catalytic chamber with the active sites is on the inside of the barrel.

The protein localises to the cytoplasm. It is found in the nucleus. The enzyme catalyses Cleavage of peptide bonds with very broad specificity.. The proteasome is a multicatalytic proteinase complex which is characterized by its ability to cleave peptides with Arg, Phe, Tyr, Leu, and Glu adjacent to the leaving group at neutral or slightly basic pH. The proteasome has an ATP-dependent proteolytic activity. The protein is Proteasome subunit beta type-7 (psmB7) of Dictyostelium discoideum (Social amoeba).